Reading from the N-terminus, the 400-residue chain is NADH-ubiquinone oxidoreductase 49 kDa subunit (400 aa).

It belongs to the complex I 49 kDa subunit family.

It localises to the mitochondrion. The enzyme catalyses a ubiquinone + NADH + 5 H(+)(in) = a ubiquinol + NAD(+) + 4 H(+)(out). Core subunit of the mitochondrial membrane respiratory chain NADH dehydrogenase (Complex I) that is believed to belong to the minimal assembly required for catalysis. Complex I functions in the transfer of electrons from NADH to the respiratory chain. The immediate electron acceptor for the enzyme is believed to be ubiquinone. Component of the iron-sulfur (IP) fragment of the enzyme. Component of the iron-sulfur (IP) fragment of the enzyme. The chain is NADH-ubiquinone oxidoreductase 49 kDa subunit (NAD7) from Paramecium tetraurelia.